Reading from the N-terminus, the 145-residue chain is Large ribosomal subunit protein uL11 (145 aa).

It belongs to the universal ribosomal protein uL11 family. Part of the ribosomal stalk of the 50S ribosomal subunit. Interacts with L10 and the large rRNA to form the base of the stalk. L10 forms an elongated spine to which L12 dimers bind in a sequential fashion forming a multimeric L10(L12)X complex. Post-translationally, one or more lysine residues are methylated.

Forms part of the ribosomal stalk which helps the ribosome interact with GTP-bound translation factors. In Sulfurihydrogenibium sp. (strain YO3AOP1), this protein is Large ribosomal subunit protein uL11.